The sequence spans 878 residues: MGSFRRDKEEEDDGPTNAYQNLEKTSVLQETRTFNETPVNARKCIHILTKILYLINQGETLVPREATDCFFAMTKLFQSKDVVLRRMVYLGIKELSSVAEDVIIVTSSLTKDMTGKEDLYRAAAIRALCSITDHTMLQAVERYMKQCIVDKNAAVSCAALVSSLRLATTAGDVVKRWANEAQEAMNSDNIMVQYHALGLLYHIRKSDRLAVSKLVNKLTRSSLKSPYAVCMLIRIACKLIEEEDIPSEELSDSPLFTFIETCLRHKSEMVIYEAAHAIVNLKNTNHRMLSPAFSILQLFCSSPKATLRFAAVRTLNKVAMTHPAAVTTCNLDLEGLITDSNRSVATLAITTLLKTGAESSVERLMKQISTFVAEISDEFKIVVVQAICALCTKYPRKHTVLMNFLSGMLREEGGLEYKTSIVDTIITIIEENADAKESGLSHLCEFIEDCEHVSLAVRILHLMGKEGPFAATPSKYIRFIYNRVILESPIVRAAAVTALSQFGASCPALLTNILVLLGRCQMDPDDEVRDRATYYLTILNTERADLYKNYIIERENCSLALLEKALVDHLNGDLEKRFDISVVPKAAAVVRAEISNDVMLVTSAPRPPKITREEESASRLAQLPGIQVLGPVHRSTAPIQLTESETEYTVQCIKHIFGQHVVFQFDCLNTLSDQFLENVRVELTLPEGFTTRAVVPCPKLPYNELQTTYVIVEFPPDAGSSIATFGATLRFVVKDCDPNTGEPDSEEGYDDEYMLEDMEITVADQIQKSKKNNFQVAWDAADSEEWLQAEDTFVLSAVTTLQDAVNTIMKILGLGSANLSEKVPEGTHLHTLLCSGTFRGGAEVLVRAKLALSEGVTLNLTVRSTDQDVAELITAAIG.

6 HEAT repeats span residues 64–101 (REAT…VAED), 287–324 (RMLS…THPA), 326–359 (VTTC…GAES), 360–396 (SVER…KYPR), 399–434 (TVLM…ENAD), and 471–508 (ATPS…SCPA).

This sequence belongs to the COPG family. In terms of assembly, oligomeric complex that consists of at least the alpha, beta, beta', gamma, delta, epsilon and zeta subunits.

The protein localises to the cytoplasm. The protein resides in the golgi apparatus membrane. It localises to the cytoplasmic vesicle. It is found in the COPI-coated vesicle membrane. Its subcellular location is the endoplasmic reticulum. Functionally, the coatomer is a cytosolic protein complex that binds to dilysine motifs and reversibly associates with Golgi non-clathrin-coated vesicles, which further mediate biosynthetic protein transport from the ER, via the Golgi up to the trans Golgi network. Coatomer complex is required for budding from Golgi membranes, and is essential for the retrograde Golgi-to-ER transport of dilysine-tagged proteins. Required for limiting lipid storage in lipid droplets. Involved in the expansion of luminal extracellular matrices and apical membrane during tubulogenesis. Required in the tracheal epithelium for luminal protein secretion and diametric tube growth. In salivary glands, required for deposition of O-glycans and luminal extracellular matrix assembly. Required for epidermal morphogenesis and cuticle development. The protein is Coatomer subunit gamma of Drosophila pseudoobscura pseudoobscura (Fruit fly).